Reading from the N-terminus, the 186-residue chain is Thioredoxin M2, chloroplastic (186 aa).

The N-terminal 72 residues, 1–72, are a transit peptide targeting the chloroplast; sequence MAAFTCTSRP…RVSRLRRAVV (72 aa). The region spanning 73–186 is the Thioredoxin domain; sequence CEAQETTTDI…LTSSLDKFLP (114 aa). Residues C110 and C113 each act as nucleophile in the active site. Cysteines 110 and 113 form a disulfide.

It belongs to the thioredoxin family. Plant M-type subfamily. Interacts with G6PD1 and G6PD4. Interacts with PGL3.

Its subcellular location is the plastid. The protein localises to the chloroplast stroma. Its function is as follows. Thiol-disulfide oxidoreductase that may participate in various redox reactions. May activate NADP-malate dehydrogenase. This is Thioredoxin M2, chloroplastic from Arabidopsis thaliana (Mouse-ear cress).